We begin with the raw amino-acid sequence, 307 residues long: Acetaldehyde dehydrogenase (307 aa).

12–15 (SGNI) serves as a coordination point for NAD(+). Cysteine 130 serves as the catalytic Acyl-thioester intermediate. Residues 161 to 169 (SVGPGTRQN) and asparagine 272 each bind NAD(+).

Belongs to the acetaldehyde dehydrogenase family.

The enzyme catalyses acetaldehyde + NAD(+) + CoA = acetyl-CoA + NADH + H(+). The polypeptide is Acetaldehyde dehydrogenase (Shewanella halifaxensis (strain HAW-EB4)).